The sequence spans 165 residues: Type VI lipase immunity protein Tli3 (165 aa).

The signal sequence occupies residues 1–21 (MKCKTLLIACLFGLGSAQALA).

Interacts with the Tle3 toxin.

Its subcellular location is the periplasm. Functionally, immunity protein that neutralizes the toxicity of the P.aeruginosa antibacterial toxin Tle3 in the periplasm to protect the cell from fratricide intoxication. The chain is Type VI lipase immunity protein Tli3 from Pseudomonas aeruginosa (strain ATCC 15692 / DSM 22644 / CIP 104116 / JCM 14847 / LMG 12228 / 1C / PRS 101 / PAO1).